Here is a 125-residue protein sequence, read N- to C-terminus: Cyclic diguanosine monophosphate-binding protein PA4608 (125 aa).

6–13 (DERRRFHR) contacts 3',3'-c-di-GMP. Residues 7-103 (ERRRFHRIAF…SISHLRRLVE (97 aa)) enclose the PilZ domain. The RXXXR motif; surrounds the surface of the c-di-GMP binding site signature appears at 9–13 (RRFHR). Positions 35 to 40 (DVSLHG) match the DXSXXG motif; surrounds the surface of the c-di-GMP binding site motif. W77 provides a ligand contact to 3',3'-c-di-GMP.

As to quaternary structure, monomer in both c-di-GMP-bound and free forms.

In terms of biological role, binds the second messenger bis-(3'-5') cyclic dimeric guanosine monophosphate (c-di-GMP). Can bind two c-di-GMP molecules per monomer. May play a role in bacterial second-messenger regulated processes. Binding to c-di-GMP induces a conformational change of the C- and N-termini resulting in the exposure of a highly negative surface on one side of the protein to a possible effector protein. The chain is Cyclic diguanosine monophosphate-binding protein PA4608 from Pseudomonas aeruginosa (strain ATCC 15692 / DSM 22644 / CIP 104116 / JCM 14847 / LMG 12228 / 1C / PRS 101 / PAO1).